The primary structure comprises 134 residues: ATP synthase epsilon chain (134 aa).

Belongs to the ATPase epsilon chain family. In terms of assembly, F-type ATPases have 2 components, CF(1) - the catalytic core - and CF(0) - the membrane proton channel. CF(1) has five subunits: alpha(3), beta(3), gamma(1), delta(1), epsilon(1). CF(0) has three main subunits: a, b and c.

The protein localises to the cell membrane. In terms of biological role, produces ATP from ADP in the presence of a proton gradient across the membrane. The sequence is that of ATP synthase epsilon chain from Clostridium botulinum (strain Eklund 17B / Type B).